Here is a 660-residue protein sequence, read N- to C-terminus: Replication restart protein PriA (660 aa).

Positions 145 to 313 (IIGSEKTNVF…KNNQIKKIIM (169 aa)) constitute a Helicase ATP-binding domain. ATP is bound at residue 158 to 165 (GIPGSGKT). Residues 256–259 (DEEH) carry the DEAH box motif. Residues C370, C373, C379, C382, C397, C400, C410, and C413 each coordinate Zn(2+). One can recognise a Helicase C-terminal domain in the interval 405–557 (KTASHCPQCE…QFYEEELDIR (153 aa)).

The protein belongs to the helicase family. PriA subfamily. As to quaternary structure, component of the replication restart primosome. The cofactor is Zn(2+).

It carries out the reaction Couples ATP hydrolysis with the unwinding of duplex DNA by translocating in the 3'-5' direction.. The catalysed reaction is ATP + H2O = ADP + phosphate + H(+). Its function is as follows. Initiates the restart of stalled replication forks, which reloads the replicative helicase on sites other than the origin of replication. Recognizes and binds to abandoned replication forks and remodels them to uncover a helicase loading site. Promotes assembly of the primosome at these replication forks. The chain is Replication restart protein PriA from Borreliella burgdorferi (strain ATCC 35210 / DSM 4680 / CIP 102532 / B31) (Borrelia burgdorferi).